The chain runs to 293 residues: tRNA (guanine-N(7)-)-methyltransferase (293 aa).

S-adenosyl-L-methionine contacts are provided by residues glycine 105, 128 to 129 (EI), 163 to 164 (NT), and cysteine 183. Aspartate 186 is a catalytic residue. An S-adenosyl-L-methionine-binding site is contributed by 261–263 (TEE).

The protein belongs to the class I-like SAM-binding methyltransferase superfamily. TrmB family. Forms a complex with trm82.

It is found in the nucleus. It catalyses the reaction guanosine(46) in tRNA + S-adenosyl-L-methionine = N(7)-methylguanosine(46) in tRNA + S-adenosyl-L-homocysteine. The protein operates within tRNA modification; N(7)-methylguanine-tRNA biosynthesis. Catalyzes the formation of N(7)-methylguanine at position 46 (m7G46) in tRNA. This Neurospora crassa (strain ATCC 24698 / 74-OR23-1A / CBS 708.71 / DSM 1257 / FGSC 987) protein is tRNA (guanine-N(7)-)-methyltransferase (trm8).